The chain runs to 509 residues: MDEFQRNENKHRSWQQFFLYPLFFREDLYAIAHDHHLDRSGSSEPTEILVSHFFSFLTVKRSIRRIRKQNNSISLLRNCDRNQFSECKKNXCSKSLLEGLTVVLEVSFAMRSKHFIEGMDGWNSIRSIHCIFPLMEDKLTHSNYISDIRVPYSIHPEILVRIFRRWIRDTPSLHLLRSILHEWQNSFSRDNLQKAIITPRENTRFSLFLWNSYVHECESFLVPLVKRFFNSQSLLYGSFPDRTHFDKKMKHIVILXXRQISTKKIWLLKDSFMHYVRYGERSLIALKGTHLEVKKWRYHLFHFWQYYFHLWFQPYRIRSLELSKTYSSFLGYFLHVKMRPLVVRAKMLDNLFITDLITNELKLIAPIRSILFFLAKEKFCDISGWPISKLSWTSLSDDDILDRFDRIWINLFHYYSGSMNQDGLYHIKYILLLSCAKTLACKHKTTIRVVREQLGSELFTKSFSKEREFISSSFSKNRLKRERIWNSEISQINPLANFWQNMQNKQIEN.

This sequence belongs to the intron maturase 2 family. MatK subfamily.

Its subcellular location is the plastid. It is found in the chloroplast. Usually encoded in the trnK tRNA gene intron. Probably assists in splicing its own and other chloroplast group II introns. In Metasequoia glyptostroboides (Dawn redwood), this protein is Maturase K.